An 85-amino-acid chain; its full sequence is Putative membrane protein insertion efficiency factor (85 aa).

The protein belongs to the UPF0161 family.

The protein localises to the cell inner membrane. Functionally, could be involved in insertion of integral membrane proteins into the membrane. The protein is Putative membrane protein insertion efficiency factor of Enterobacter sp. (strain 638).